The sequence spans 541 residues: Propionyl-CoA carboxylase beta chain, mitochondrial (541 aa).

A mitochondrion-targeting transit peptide spans 1 to 28 (MAAAIRIRAVAAGARLSVLNCGLGITTR). Positions 34–292 (PVSVKERIDN…SSQDPAPIRE (259 aa)) constitute a CoA carboxyltransferase N-terminal domain. Residues 34-535 (PVSVKERIDN…SKKVHRPWRK (502 aa)) are carboxyltransferase. Ser-73 is modified (phosphoserine). Lys-101 is modified (N6-acetyllysine; alternate). N6-succinyllysine; alternate is present on Lys-101. Lys-250 is modified (N6-succinyllysine). Residues 296–535 (PSDRLVPELD…SKKVHRPWRK (240 aa)) form the CoA carboxyltransferase C-terminal domain. Residues 327–360 (DEREFFEIMPSYAKNIVVGFARMNGRTVGIVGNQ) are acyl-CoA binding. Lys-476 and Lys-491 each carry N6-acetyllysine; alternate. N6-succinyllysine; alternate is present on residues Lys-476 and Lys-491.

Belongs to the AccD/PCCB family. In terms of assembly, the holoenzyme is a dodecamer composed of 6 PCCA/alpha subunits and 6 PCCB/beta subunits. In terms of tissue distribution, broadly expressed. Most abundantly expressed in the kidney, liver, small intestine and stomach.

The protein resides in the mitochondrion matrix. The catalysed reaction is propanoyl-CoA + hydrogencarbonate + ATP = (S)-methylmalonyl-CoA + ADP + phosphate + H(+). It carries out the reaction butanoyl-CoA + hydrogencarbonate + ATP = (2S)-ethylmalonyl-CoA + ADP + phosphate + H(+). Its pathway is metabolic intermediate metabolism; propanoyl-CoA degradation; succinyl-CoA from propanoyl-CoA: step 1/3. Functionally, this is one of the 2 subunits of the biotin-dependent propionyl-CoA carboxylase (PCC), a mitochondrial enzyme involved in the catabolism of odd chain fatty acids, branched-chain amino acids isoleucine, threonine, methionine, and valine and other metabolites. Propionyl-CoA carboxylase catalyzes the carboxylation of propionyl-CoA/propanoyl-CoA to D-methylmalonyl-CoA/(S)-methylmalonyl-CoA. Within the holoenzyme, the alpha subunit catalyzes the ATP-dependent carboxylation of the biotin carried by the biotin carboxyl carrier (BCC) domain, while the beta subunit then transfers the carboxyl group from carboxylated biotin to propionyl-CoA. Propionyl-CoA carboxylase also significantly acts on butyryl-CoA/butanoyl-CoA, which is converted to ethylmalonyl-CoA/(2S)-ethylmalonyl-CoA. Other alternative minor substrates include (2E)-butenoyl-CoA/crotonoyl-CoA. In Mus musculus (Mouse), this protein is Propionyl-CoA carboxylase beta chain, mitochondrial.